We begin with the raw amino-acid sequence, 471 residues long: Nitrosourea synthase (471 aa).

The segment at 177 to 328 (MWLVQFAPDF…GRMAREKIIK (152 aa)) is HO-like. 10 residues coordinate Fe(2+): glutamate 189, glutamate 215, histidine 225, glutamate 281, histidine 311, aspartate 315, histidine 318, histidine 407, histidine 409, and histidine 448. The segment at 397-459 (VEPRGELSNT…ANIESDECVY (63 aa)) is cupin.

In terms of assembly, homodimer. Fe(2+) is required as a cofactor.

The catalysed reaction is N(omega)-methyl-L-arginine + 2 NADH + 3 O2 + H(+) = N(delta)-hydroxy-N(omega)-methyl-N(omega)-nitroso-L-citrulline + 2 NAD(+) + 3 H2O. It carries out the reaction N(omega)-methyl-L-arginine + NADH + O2 + H(+) = N(delta)-hydroxy-N(omega)-methyl-L-arginine + NAD(+) + H2O. It catalyses the reaction N(delta)-hydroxy-N(omega)-methyl-L-arginine + NADH + O2 = N(delta),N(omega')-dihydroxy-N(omega)-methyl-L-arginine + NAD(+) + H2O. The enzyme catalyses N(delta),N(omega')-dihydroxy-N(omega)-methyl-L-arginine + O2 = N(delta)-hydroxy-N(omega)-methyl-N(omega)-nitroso-L-citrulline + H2O. The catalysed reaction is 2 N(delta)-hydroxy-N(omega)-methyl-N(omega)-nitroso-L-citrulline + AH2 = 2 N(delta)-hydroxy-N(omega)-methyl-L-citrulline + 2 nitric oxide + A. It functions in the pathway antibiotic biosynthesis. Its function is as follows. Involved in the biosynthesis of the glucosamine-nitrosourea antibiotic streptozotocin (SZN). Catalyzes a complex multi-step reaction: the overall reaction is an oxidative rearrangement of the guanidine group of N(omega)-methyl-L-arginine (L-NMA), generating an N-nitrosourea product. SznF first hydroxylates L-NMA to form N(delta)-hydroxy-N(omega)-methyl-L-arginine (L-HMA), which is further hydroxylated to give N(delta)-hydroxy-N(omega)-hydroxy-N(omega)-methyl-L-arginine (L-DHMA). Subsequently, an oxidative rearrangement converts this intermediate to N(delta)-hydroxy-N(omega)-methyl-N(omega)-nitroso-L-citrulline. This product is unstable, and degrades non-enzymically into nitric oxide and the denitrosated product N(delta)-hydroxy-N(omega)-methyl-L-citrulline. The polypeptide is Nitrosourea synthase (Streptomyces achromogenes subsp. streptozoticus).